Consider the following 37-residue polypeptide: MTTLTTLPSIFVPLVGLVFPAIAMASLFLHVQKNKIF.

The helical transmembrane segment at 9-29 (SIFVPLVGLVFPAIAMASLFL) threads the bilayer.

It belongs to the PsaI family.

The protein localises to the plastid. It is found in the chloroplast thylakoid membrane. Its function is as follows. May help in the organization of the PsaL subunit. The protein is Photosystem I reaction center subunit VIII of Cucumis sativus (Cucumber).